The chain runs to 355 residues: GTPase Obg (355 aa).

The Obg domain occupies 1 to 159 (MKLVDEAEIL…RLLKLELKLL (159 aa)). In terms of domain architecture, OBG-type G spans 160–342 (ADVGLLGFPN…IMKDVMAFFD (183 aa)). GTP is bound by residues 166 to 173 (GFPNAGKS), 191 to 195 (FTTLY), 213 to 216 (DVPG), 292 to 295 (NKAD), and 323 to 325 (SAL). Residues S173 and T193 each coordinate Mg(2+).

It belongs to the TRAFAC class OBG-HflX-like GTPase superfamily. OBG GTPase family. In terms of assembly, monomer. Mg(2+) serves as cofactor.

The protein resides in the cytoplasm. An essential GTPase which binds GTP, GDP and possibly (p)ppGpp with moderate affinity, with high nucleotide exchange rates and a fairly low GTP hydrolysis rate. Plays a role in control of the cell cycle, stress response, ribosome biogenesis and in those bacteria that undergo differentiation, in morphogenesis control. The protein is GTPase Obg of Xanthomonas axonopodis pv. citri (strain 306).